We begin with the raw amino-acid sequence, 565 residues long: NAD-dependent malic enzyme (565 aa).

Tyr104 functions as the Proton donor in the catalytic mechanism. NAD(+) is bound at residue Arg157. Lys175 acts as the Proton acceptor in catalysis. Residues Glu246, Asp247, and Asp270 each coordinate a divalent metal cation. Positions 270 and 418 each coordinate NAD(+).

This sequence belongs to the malic enzymes family. In terms of assembly, homotetramer. Mg(2+) serves as cofactor. Mn(2+) is required as a cofactor.

It carries out the reaction (S)-malate + NAD(+) = pyruvate + CO2 + NADH. The catalysed reaction is oxaloacetate + H(+) = pyruvate + CO2. The polypeptide is NAD-dependent malic enzyme (Pectobacterium atrosepticum (strain SCRI 1043 / ATCC BAA-672) (Erwinia carotovora subsp. atroseptica)).